A 215-amino-acid polypeptide reads, in one-letter code: Proteasome subunit beta type-1 (215 aa).

N-acetylmethionine is present on methionine 1. The propeptide at 1–19 (MNGIQVDINRLKKGEVSLG) is removed in mature form. The Nucleophile role is filled by threonine 20.

This sequence belongs to the peptidase T1B family. As to quaternary structure, the 26S proteasome consists of a 20S proteasome core and two 19S regulatory subunits. The 20S proteasome core is composed of 28 subunits that are arranged in four stacked rings, resulting in a barrel-shaped structure. The two end rings are each formed by seven alpha subunits, and the two central rings are each formed by seven beta subunits. The catalytic chamber with the active sites is on the inside of the barrel.

The protein localises to the cytoplasm. It localises to the nucleus. It carries out the reaction Cleavage of peptide bonds with very broad specificity.. The proteasome degrades poly-ubiquitinated proteins in the cytoplasm and in the nucleus. It is essential for the regulated turnover of proteins and for the removal of misfolded proteins. The proteasome is a multicatalytic proteinase complex that is characterized by its ability to cleave peptides with Arg, Phe, Tyr, Leu, and Glu adjacent to the leaving group at neutral or slightly basic pH. It has an ATP-dependent proteolytic activity. PRE3 and PRE4 are necessary for the peptidyl-glutamyl-peptide-hydrolyzing activity. Functionally, this subunit is necessary for the peptidylglutamyl-peptide hydrolyzing activity. The sequence is that of Proteasome subunit beta type-1 (PRE3) from Saccharomyces cerevisiae (strain ATCC 204508 / S288c) (Baker's yeast).